The chain runs to 461 residues: Dihydrolipoyl dehydrogenase (461 aa).

Residues 34 to 42 (EEDQAGGTC), K51, and G114 each bind FAD. C42 and C47 are joined by a disulfide. NAD(+)-binding positions include 177–181 (GGGVI), E200, and 261–264 (AIGR). FAD contacts are provided by D304 and A312. The Proton acceptor role is filled by H436.

It belongs to the class-I pyridine nucleotide-disulfide oxidoreductase family. FAD is required as a cofactor.

It is found in the cytoplasm. It catalyses the reaction N(6)-[(R)-dihydrolipoyl]-L-lysyl-[protein] + NAD(+) = N(6)-[(R)-lipoyl]-L-lysyl-[protein] + NADH + H(+). Its function is as follows. The branched-chain alpha-keto dehydrogenase complex catalyzes the overall conversion of alpha-keto acids to acyl-CoA and CO(2). It contains multiple copies of 3 enzymatic components: branched-chain alpha-keto acid decarboxylase (E1), lipoamide acyltransferase (E2) and lipoamide dehydrogenase (E3). This chain is Dihydrolipoyl dehydrogenase (lpdA), found in Chlamydia pneumoniae (Chlamydophila pneumoniae).